We begin with the raw amino-acid sequence, 539 residues long: Fusion glycoprotein F0 (539 aa).

The N-terminal stretch at Met-1–Gly-18 is a signal peptide. Disulfide bonds link Cys-28–Cys-407, Cys-60–Cys-182, Cys-283–Cys-311, Cys-292–Cys-301, Cys-326–Cys-335, Cys-350–Cys-361, and Cys-384–Cys-390. The N-linked (GlcNAc...) asparagine; by host glycan is linked to Asn-57. Positions Phe-103–Thr-127 are fusion peptide. Residue Asn-172 is glycosylated (N-linked (GlcNAc...) asparagine; by host). Positions Arg-329–Asp-331 match the Cell attachment site motif. Asn-353 is a glycosylation site (N-linked (GlcNAc...) asparagine; by host). The helical transmembrane segment at Ile-492–Ile-512 threads the bilayer. The interval Pro-520–Ser-539 is disordered. Over residues Gly-529–Ser-539 the composition is skewed to polar residues.

It belongs to the paramyxoviruses fusion glycoprotein family. Homotrimer. Heterodimer with fusion protein F2; disulfide-linked. As a heterodimer with F2, interacts with host heparan sulfate. As a heterodimer with F2, interacts with host integrin ITGAV/ITGB1. Part of a complex composed of F1, F2 and G glycoproteins. As to quaternary structure, homotrimer. Heterodimer with fusion protein F1; disulfide-linked. As a heterodimer with F1, interacts with host heparan sulfate. As a heterodimer with F2, interacts with host integrin ITGAV/ITGB1. Part of a complex composed of F1, F2 and G glycoproteins. The F glycoprotein is synthesized as a F0 inactive precursor that is heavily N-glycosylated and processed.

The protein localises to the virion membrane. It localises to the host cell membrane. Its function is as follows. Inactive precursor that is cleaved to give rise to the mature F1 and F2 fusion glycoproteins. In terms of biological role, class I viral fusion protein. Under the current model, the protein has at least 3 conformational states: pre-fusion native state, pre-hairpin intermediate state, and post-fusion hairpin state. During viral and plasma cell membrane fusion, the coiled coil regions assume a trimer-of-hairpins structure, positioning the fusion peptide in close proximity to the C-terminal region of the ectodomain. The formation of this structure appears to drive apposition and subsequent fusion of viral and cellular membranes leading to delivery of the nucleocapsid into the cytoplasm. This fusion is pH independent and occurs at the plasma or endosomal membrane. The trimer of F1-F2 (F protein) also facilitates the attachment to host cell by binding to host heparan sulfate. Major determinant of the species specificity of RSV infection. The trimer of F1-F2 (F protein) also facilitates the attachment to host cell by binding to host heparan sulfate. This is Fusion glycoprotein F0 (F) from Human metapneumovirus (strain CAN97-83) (HMPV).